The primary structure comprises 182 residues: Oligoribonuclease (182 aa).

In terms of domain architecture, Exonuclease spans 8–171 (LIWIDLEMTG…DDIRESIKEL (164 aa)). The active site involves tyrosine 129.

It belongs to the oligoribonuclease family.

It is found in the cytoplasm. 3'-to-5' exoribonuclease specific for small oligoribonucleotides. The polypeptide is Oligoribonuclease (Actinobacillus succinogenes (strain ATCC 55618 / DSM 22257 / CCUG 43843 / 130Z)).